The primary structure comprises 665 residues: Target of rapamycin complex 2 subunit sin1 (665 aa).

Position 62 is a phosphoserine (S62). 2 stretches are compositionally biased toward polar residues: residues 65 to 83 and 100 to 109; these read IVAN…TKQV and YATSDLSESS. The tract at residues 65 to 112 is disordered; it reads IVANDTVSNVRKPSDTKQVNGAGGQVNHSRAEDSDYATSDLSESSDVG. Position 133 is a phosphoserine (S133). The region spanning 255 to 392 is the CRIM domain; the sequence is TSALRALLEH…ATPAQIKENQ (138 aa). Positions 395–433 are disordered; sequence YPFKSKHPTSIPEANNKTHIRHTSSTSSQSQKQAQDVKD. Phosphoserine occurs at positions 404, 490, 502, and 530. Residues 517-537 form a disordered region; it reads RDKKGSTQQLPTSSPQNSVYG. Residues 522–536 show a composition bias toward polar residues; that stretch reads STQQLPTSSPQNSVY. Positions 558-659 constitute an SIN1-type PH domain; it reads TYQEFLVWKR…IVSRIRALMN (102 aa).

Belongs to the SIN1 family. In terms of assembly, the target of rapamycin complex 2 (TORC2) is composed of at least bit61, pop3/wat1, sin1, ste20 and tor1. Interacts with the sty1 MAP kinase. Post-translationally, phosphorylated; under environmental stress. Either Ser-61 or Ser-62 and Ser-298, Ser-299 or Ser-301 are phosphorylated as well.

Functionally, component of the mechanistic target of rapamycin complex 2 (mTORC2), which regulates multiple cellular processes to control cell growth in response to environmental signals. In response to signals, TORC2 phosphorylates AGC protein kinase family members, such as gad8. TORC2 is required for cell survival under various stress conditions. TORC2 positively controls G1 cell-cycle arrest, sexual development and amino acid uptake. Positively regulates amino acid uptake through the control of expression of amino acid permeases. Within the mTORC2 complex, sin1 acts as a substrate adapter which recognizes and binds AGC protein kinase family members for phosphorylation by tor1. The chain is Target of rapamycin complex 2 subunit sin1 from Schizosaccharomyces pombe (strain 972 / ATCC 24843) (Fission yeast).